Consider the following 465-residue polypeptide: Ribulose bisphosphate carboxylase large chain (465 aa).

The residue at position 4 (Lys-4) is an N6,N6,N6-trimethyllysine. Positions 113 and 163 each coordinate substrate. The active-site Proton acceptor is Lys-165. Residue Lys-167 coordinates substrate. 3 residues coordinate Mg(2+): Lys-191, Asp-193, and Glu-194. An N6-carboxylysine modification is found at Lys-191. His-284 (proton acceptor) is an active-site residue. 3 residues coordinate substrate: Arg-285, His-317, and Ser-369.

It belongs to the RuBisCO large chain family. Type I subfamily. Heterohexadecamer of 8 large chains and 8 small chains; disulfide-linked. The disulfide link is formed within the large subunit homodimers. Mg(2+) is required as a cofactor. The disulfide bond which can form in the large chain dimeric partners within the hexadecamer appears to be associated with oxidative stress and protein turnover.

Its subcellular location is the plastid. The protein resides in the chloroplast. It catalyses the reaction 2 (2R)-3-phosphoglycerate + 2 H(+) = D-ribulose 1,5-bisphosphate + CO2 + H2O. It carries out the reaction D-ribulose 1,5-bisphosphate + O2 = 2-phosphoglycolate + (2R)-3-phosphoglycerate + 2 H(+). RuBisCO catalyzes two reactions: the carboxylation of D-ribulose 1,5-bisphosphate, the primary event in carbon dioxide fixation, as well as the oxidative fragmentation of the pentose substrate in the photorespiration process. Both reactions occur simultaneously and in competition at the same active site. The protein is Ribulose bisphosphate carboxylase large chain of Eucommia ulmoides (Hardy rubber tree).